The primary structure comprises 358 residues: Peptide chain release factor 1 (358 aa).

Gln233 is subject to N5-methylglutamine.

This sequence belongs to the prokaryotic/mitochondrial release factor family. Post-translationally, methylated by PrmC. Methylation increases the termination efficiency of RF1.

The protein localises to the cytoplasm. In terms of biological role, peptide chain release factor 1 directs the termination of translation in response to the peptide chain termination codons UAG and UAA. The protein is Peptide chain release factor 1 of Staphylococcus saprophyticus subsp. saprophyticus (strain ATCC 15305 / DSM 20229 / NCIMB 8711 / NCTC 7292 / S-41).